Consider the following 448-residue polypeptide: MSQTNPKVGIVSLGCSKALVDSERILTKLRAEGYDISGSYDGADVVIVNTCGFLDSARAESLEAIGEALAENGKVIVTGCMGGDEKAIRSAHPSVLAVSGPHQYQAVVEAVHAAIPPLHDPKLSLVPPEGLHLTPHHYAYLKISEGCNNSCSFCIIPDIRGPLMSRPAADVLGEAERLAEAGVRELLVISQDTSAYGLDLRHAESTWRGRPVRAHLTDLASALGELGIWIRLHYVYPYPHVDEIIPLMAEGKILPYLDIPFQHASPNVLKAMRRPANQEKVLGRIRSWRETCPDLTLRSTFIVGFPGETEEDFDSLLGWLEEAQLDRVGCFKYEDVKGAPANAFADQVDEDVKEERHQRFMEAARQIADERGAAKEGTRIEVIIDEVDEEGAIGRSKADSPEVDGAVFMNGETDLEPGDLVIVEVEAAEDYDLWGDVVERLPPPRPRR.

One can recognise an MTTase N-terminal domain in the interval P6–P116. C15, C51, C80, C147, C151, and C154 together coordinate [4Fe-4S] cluster. A Radical SAM core domain is found at L133 to R371. The TRAM domain occupies A373–E439.

It belongs to the methylthiotransferase family. RimO subfamily. [4Fe-4S] cluster serves as cofactor.

The protein resides in the cytoplasm. The catalysed reaction is L-aspartate(89)-[ribosomal protein uS12]-hydrogen + (sulfur carrier)-SH + AH2 + 2 S-adenosyl-L-methionine = 3-methylsulfanyl-L-aspartate(89)-[ribosomal protein uS12]-hydrogen + (sulfur carrier)-H + 5'-deoxyadenosine + L-methionine + A + S-adenosyl-L-homocysteine + 2 H(+). Catalyzes the methylthiolation of an aspartic acid residue of ribosomal protein uS12. The protein is Ribosomal protein uS12 methylthiotransferase RimO of Paramagnetospirillum magneticum (strain ATCC 700264 / AMB-1) (Magnetospirillum magneticum).